Here is a 459-residue protein sequence, read N- to C-terminus: Ribosomal protein uS12 methylthiotransferase RimO (459 aa).

The MTTase N-terminal domain occupies Pro-11–Pro-126. 6 residues coordinate [4Fe-4S] cluster: Cys-20, Cys-56, Cys-85, Cys-157, Cys-161, and Cys-164. One can recognise a Radical SAM core domain in the interval Leu-143–Ala-388. Residues Ala-391 to Val-459 enclose the TRAM domain.

This sequence belongs to the methylthiotransferase family. RimO subfamily. Requires [4Fe-4S] cluster as cofactor.

Its subcellular location is the cytoplasm. It catalyses the reaction L-aspartate(89)-[ribosomal protein uS12]-hydrogen + (sulfur carrier)-SH + AH2 + 2 S-adenosyl-L-methionine = 3-methylsulfanyl-L-aspartate(89)-[ribosomal protein uS12]-hydrogen + (sulfur carrier)-H + 5'-deoxyadenosine + L-methionine + A + S-adenosyl-L-homocysteine + 2 H(+). Functionally, catalyzes the methylthiolation of an aspartic acid residue of ribosomal protein uS12. The protein is Ribosomal protein uS12 methylthiotransferase RimO of Burkholderia pseudomallei (strain K96243).